We begin with the raw amino-acid sequence, 226 residues long: Urease accessory protein UreF (226 aa).

It belongs to the UreF family. UreD, UreF and UreG form a complex that acts as a GTP-hydrolysis-dependent molecular chaperone, activating the urease apoprotein by helping to assemble the nickel containing metallocenter of UreC. The UreE protein probably delivers the nickel.

Its subcellular location is the cytoplasm. In terms of biological role, required for maturation of urease via the functional incorporation of the urease nickel metallocenter. The sequence is that of Urease accessory protein UreF from Burkholderia ambifaria (strain MC40-6).